Reading from the N-terminus, the 176-residue chain is MWRLALGGVFLAAAQACVFCRLPAHDLSGRLARLCSQMEARQKECGASPDFSAFALDEVSMNKVTEKTHRVLRVMEIKEAVSSLPSYWSWLRKTKLPEYTREALCPPACRGSTTLYNCSTCKGTEVSCWPRKRCFPGSQDLWEAKILLLSIFGAFLLLGVLSLLVESHHLQAKSGL.

Residues 1–16 (MWRLALGGVFLAAAQA) form the signal peptide. Intrachain disulfides connect C17-C118, C20-C121, C105-C128, and C109-C134. The Extracellular segment spans residues 17–145 (CVFCRLPAHD…PGSQDLWEAK (129 aa)). The helical transmembrane segment at 146-166 (ILLLSIFGAFLLLGVLSLLVE) threads the bilayer. The Cytoplasmic portion of the chain corresponds to 167–176 (SHHLQAKSGL).

This sequence belongs to the TMEM95 family. In terms of assembly, does not interact with sperm-egg fusion proteins IZUMO1 or IZUMO1R/JUNO. In terms of processing, N-glycosylated. As to expression, spermatozoa (at protein level).

It is found in the cytoplasmic vesicle. It localises to the secretory vesicle. The protein resides in the acrosome membrane. Functionally, sperm protein required for fusion of sperm with the egg membrane during fertilization. The protein is Sperm-egg fusion protein TMEM95 of Homo sapiens (Human).